The chain runs to 551 residues: Small ribosomal subunit protein bS1 (551 aa).

S1 motif domains follow at residues 21-83 (GALV…LSRE), 101-167 (GEMV…VSRR), 188-256 (GQEI…LGMK), 273-343 (NSRV…LGIK), 360-430 (DEKI…LGIK), and 447-516 (DAVI…VSHK).

Belongs to the bacterial ribosomal protein bS1 family.

Its function is as follows. Binds mRNA; thus facilitating recognition of the initiation point. It is needed to translate mRNA with a short Shine-Dalgarno (SD) purine-rich sequence. This Coxiella burnetii (strain RSA 493 / Nine Mile phase I) protein is Small ribosomal subunit protein bS1 (rpsA).